The following is a 75-amino-acid chain: Alpha-elapitoxin-Bc2b (75 aa).

The N-terminal stretch at 1–2 (YT) is a signal peptide. 5 disulfide bridges follow: Cys5/Cys24, Cys17/Cys45, Cys30/Cys34, Cys49/Cys60, and Cys61/Cys66.

In terms of assembly, monomer in solution, homodimer in crystal state. In terms of tissue distribution, expressed by the venom gland.

It is found in the secreted. Binds to muscular and neuronal nicotinic acetylcholine receptor (nAChR) and inhibits acetylcholine from binding to the receptor, thereby impairing neuromuscular and neuronal transmission. Blocks muscle type nAChR. Also binds with high affinity to alpha-7/CHRNA7 nAChRs. In addition, shows a weak inhibition of neuronal alpha-3-beta-2/CHRNA3-CHRNB2 nAChR. Selectively binds to alpha-1-delta subunit interface of the mouse muscle nicotinic acetylcholine receptor, with a 10-fold higher affinity for the adult than for the fetal receptors. In vivo, when intraperitoneally injected into mice, causes flaccid paralysis and respiratory distress, followed by death within 2-4 hours. This chain is Alpha-elapitoxin-Bc2b, found in Bungarus candidus (Malayan krait).